A 264-amino-acid polypeptide reads, in one-letter code: Outer kinetochore KNL1 complex subunit sos7 (264 aa).

Positions 90–236 (EAEDNEKLET…SNQIKAAIHT (147 aa)) form a coiled coil.

This sequence belongs to the KRE28 family. As to quaternary structure, component of the KNL1/SPC105 complex composed of at least spc7 and sos7. Part of the outer kinetochore KMN network that includes the KNL1, MIS12 and NDC80 complexes. Interacts (via C-terminus) with spc7 (via C-terminus); the interaction is direct.

The protein localises to the nucleus. The protein resides in the chromosome. It localises to the centromere. Its subcellular location is the kinetochore. In terms of biological role, acts as a component of the outer kinetochore KNL1 complex that facilitates microtubule-kinetochore interactions and the spindle assembly checkpoint. Kinetochores, consisting of a centromere-associated inner segment and a microtubule-contacting outer segment, play a crucial role in chromosome segregation by mediating the physical connection between centromeric DNA and spindle microtubules. The outer kinetochore is made up of the ten-subunit KMN network, comprising the MIS12, NDC80 and KNL1 complexes, and auxiliary microtubule-associated components; together they connect the outer kinetochore with the inner kinetochore, bind microtubules, and mediate interactions with mitotic checkpoint proteins that delay anaphase until chromosomes are bioriented on the spindle. This chain is Outer kinetochore KNL1 complex subunit sos7 (sos7), found in Schizosaccharomyces pombe (strain 972 / ATCC 24843) (Fission yeast).